An 814-amino-acid polypeptide reads, in one-letter code: Pre-rRNA-processing protein TSR1 homolog (814 aa).

A disordered region spans residues 1–67; that stretch reads MADHAFHRPG…NQMNQLRKNK (67 aa). Over residues 16–27 the composition is skewed to basic residues; that stretch reads NKAHKTGRHRSK. One can recognise a Bms1-type G domain in the interval 84–249; the sequence is APFLVCLLPM…MRRIGGQKKR (166 aa). 2 disordered regions span residues 316 to 357 and 392 to 448; these read PYKL…DAEQ and WIPD…EEFQ. Residues 317 to 340 are compositionally biased toward basic and acidic residues; sequence YKLDKSRDGENSEVRLLDRSDPSK. Over residues 395–426 the composition is skewed to acidic residues; the sequence is DVEEVEDPDGKDDDDMSEDDDDDKEDDNEDFM. Residues 431 to 442 are compositionally biased toward basic and acidic residues; that stretch reads KSFEDEYEKRDS. Thr-444 is subject to Phosphothreonine.

Belongs to the TRAFAC class translation factor GTPase superfamily. Bms1-like GTPase family. TSR1 subfamily.

It localises to the nucleus. The protein resides in the nucleolus. In terms of biological role, required during maturation of the 40S ribosomal subunit in the nucleolus. This is Pre-rRNA-processing protein TSR1 homolog from Drosophila melanogaster (Fruit fly).